The primary structure comprises 580 residues: E3 ubiquitin-protein ligase TRIM45 (580 aa).

An RING-type zinc finger spans residues 29–98 (CPLCMGLFKA…QIGILCPVCD (70 aa)). 2 B box-type zinc fingers span residues 130–176 (GQGL…MVDL) and 186–227 (GKPI…CDFT). Zn(2+) contacts are provided by C135, C138, C158, H162, C191, H194, C214, and H219. Residues 281–335 (SEGYIKAIEEHRDKLLKQLEDIRVQKENSLQLQKAQLEQLLADMRTGVEFTEHLL) are a coiled coil. One copy of the Filamin repeat lies at 394–497 (TKEVDPAKCV…VQGSPFTVTV (104 aa)).

It belongs to the TRIM/RBCC family.

The protein localises to the cytoplasm. The protein resides in the nucleus. The catalysed reaction is S-ubiquitinyl-[E2 ubiquitin-conjugating enzyme]-L-cysteine + [acceptor protein]-L-lysine = [E2 ubiquitin-conjugating enzyme]-L-cysteine + N(6)-ubiquitinyl-[acceptor protein]-L-lysine.. E3 ubiquitin-protein ligase that plays a role in the regulation of inflammatory response. Mechanistically, mediates the 'Lys-48'-linked polyubiquitination of TAB2, a regulatory protein of the kinase TAK1, leading to its degradation via the proteasomal pathway and inhibition of the TLR-mediated inflammatory immune response. May act as a transcriptional repressor in mitogen-activated protein kinase signaling pathway. The chain is E3 ubiquitin-protein ligase TRIM45 (TRIM45) from Bos taurus (Bovine).